A 129-amino-acid chain; its full sequence is Sulfurtransferase TusD (129 aa).

The active-site Cysteine persulfide intermediate is Cys79.

This sequence belongs to the DsrE/TusD family. As to quaternary structure, heterohexamer, formed by a dimer of trimers. The hexameric TusBCD complex contains 2 copies each of TusB, TusC and TusD. The TusBCD complex interacts with TusE.

It is found in the cytoplasm. In terms of biological role, part of a sulfur-relay system required for 2-thiolation of 5-methylaminomethyl-2-thiouridine (mnm(5)s(2)U) at tRNA wobble positions. Accepts sulfur from TusA and transfers it in turn to TusE. The chain is Sulfurtransferase TusD from Serratia proteamaculans (strain 568).